The sequence spans 147 residues: Putative protein CLUHP3 (147 aa).

Positions 14–47 (KEPEGGRRRLSHPGNMGWMRPSQETTPPDRSHHS) are disordered.

The polypeptide is Putative protein CLUHP3 (CLUHP3) (Homo sapiens (Human)).